Here is a 297-residue protein sequence, read N- to C-terminus: N-acetylmuramic acid 6-phosphate etherase (297 aa).

The region spanning 56-219 is the SIS domain; the sequence is AIEAFNKGGR…STISMIGIGK (164 aa). The active-site Proton donor is Glu-84. The active site involves Glu-115.

The protein belongs to the GCKR-like family. MurNAc-6-P etherase subfamily. As to quaternary structure, homodimer.

It carries out the reaction N-acetyl-D-muramate 6-phosphate + H2O = N-acetyl-D-glucosamine 6-phosphate + (R)-lactate. It participates in amino-sugar metabolism; N-acetylmuramate degradation. Functionally, specifically catalyzes the cleavage of the D-lactyl ether substituent of MurNAc 6-phosphate, producing GlcNAc 6-phosphate and D-lactate. In Lactococcus lactis subsp. cremoris (strain SK11), this protein is N-acetylmuramic acid 6-phosphate etherase.